Reading from the N-terminus, the 304-residue chain is Phosphonates import ATP-binding protein PhnC 1 (304 aa).

The ABC transporter domain occupies 4–240 (VSLQNVTKLF…VIDDLYYAGS (237 aa)). Residue 37-44 (GPSGAGKS) participates in ATP binding. The segment at 240 to 304 (SESTPVSHGD…TETDTGEAQL (65 aa)) is disordered. Residues 263 to 272 (TSVSSDMETT) are compositionally biased toward polar residues. A compositionally biased stretch (acidic residues) spans 289–304 (TDTETDTETDTGEAQL).

This sequence belongs to the ABC transporter superfamily. Phosphonates importer (TC 3.A.1.9.1) family. In terms of assembly, the complex is composed of two ATP-binding proteins (PhnC), two transmembrane proteins (PhnE) and a solute-binding protein (PhnD).

The protein resides in the cell membrane. The catalysed reaction is phosphonate(out) + ATP + H2O = phosphonate(in) + ADP + phosphate + H(+). Functionally, part of the ABC transporter complex PhnCDE involved in phosphonates import. Responsible for energy coupling to the transport system. This chain is Phosphonates import ATP-binding protein PhnC 1, found in Haloquadratum walsbyi (strain DSM 16790 / HBSQ001).